A 117-amino-acid polypeptide reads, in one-letter code: Iron-sulfur cluster insertion protein ErpA (117 aa).

3 residues coordinate iron-sulfur cluster: cysteine 45, cysteine 109, and cysteine 111.

This sequence belongs to the HesB/IscA family. In terms of assembly, homodimer. It depends on iron-sulfur cluster as a cofactor.

Its function is as follows. Required for insertion of 4Fe-4S clusters for at least IspG. In Blochmanniella pennsylvanica (strain BPEN), this protein is Iron-sulfur cluster insertion protein ErpA.